The sequence spans 712 residues: Secretin OutD (712 aa).

A signal peptide spans 1–27 (MLGKGIKKSWGWLGLTVLLLGSPCGWA). The N0 stretch occupies residues 28 to 124 (AEFSASFKGT…LANNEQPGVG (97 aa)). Residues 126-190 (ELVTRVVPLN…DIVNTVDKTG (65 aa)) form an N1 region. The interval 191–264 (DREMITVSLN…MIRQLDRKQV (74 aa)) is N2. The interval 267 to 394 (GGTKVIYLKY…DLEQVINQLD (128 aa)) is N3. The disordered stretch occupies residues 288-342 (GNGTSGNRNSSSTNSSRPSSTRSSSTLNNSNSSSSGSSSGSGSSSSSSSSSMGFG). Residues 399–651 (QVLVEAIIAE…LFLRPTIIRD (253 aa)) form a secretin region. Positions 653–712 (QQYQQASISKYNSFNNEQQQQRGQGNSVLDNNTLRLSGGNTYTFRQVQSSISAFYQPEGR) are s domain.

It belongs to the bacterial secretin family. GSP D subfamily. As to quaternary structure, forms a cylindrical channel with 15 subunits.

The protein localises to the cell outer membrane. In terms of biological role, involved in a type II secretion system (T2SS, formerly general secretion pathway, GSP) for the export of proteins. Required for the translocation of the multiple pectic enzymes. This subunit forms the outer membrane channel. This Dickeya chrysanthemi (Pectobacterium chrysanthemi) protein is Secretin OutD (outD).